The primary structure comprises 156 residues: Large ribosomal subunit protein uL30 (156 aa).

This sequence belongs to the universal ribosomal protein uL30 family. As to quaternary structure, part of the 50S ribosomal subunit.

In Thermofilum pendens (strain DSM 2475 / Hrk 5), this protein is Large ribosomal subunit protein uL30.